We begin with the raw amino-acid sequence, 295 residues long: Cop9 signalosome-interactor 1 (295 aa).

In terms of assembly, component of a COP9 signalosome-like (CSN) complex, composed of RRI1/CSN5, CSN9, RRI2/CSN10, PCI8/CSN11, CSN12 and CSI1. In the complex, it probably interacts directly with CSN9 and CSN12. Interacts also with RPN5.

Its subcellular location is the cytoplasm. The protein localises to the nucleus. Functionally, component of the COP9 signalosome (CSN) complex that acts as an regulator of the ubiquitin (Ubl) conjugation pathway by mediating the deneddylation of the cullin subunit of SCF-type E3 ubiquitin-protein ligase complexes The CSN complex is involved in the regulation of the mating pheromone response. This Saccharomyces cerevisiae (strain ATCC 204508 / S288c) (Baker's yeast) protein is Cop9 signalosome-interactor 1 (CSI1).